The primary structure comprises 248 residues: DNA polymerase sliding clamp (248 aa).

This sequence belongs to the PCNA family. As to quaternary structure, homotrimer. The subunits circularize to form a toroid; DNA passes through its center. Replication factor C (RFC) is required to load the toroid on the DNA.

In terms of biological role, sliding clamp subunit that acts as a moving platform for DNA processing. Responsible for tethering the catalytic subunit of DNA polymerase and other proteins to DNA during high-speed replication. The chain is DNA polymerase sliding clamp from Nitrosopumilus maritimus (strain SCM1).